A 640-amino-acid chain; its full sequence is 1,4-alpha-glucan branching enzyme GlgB (640 aa).

Aspartate 318 (nucleophile) is an active-site residue. The Proton donor role is filled by glutamate 371.

The protein belongs to the glycosyl hydrolase 13 family. GlgB subfamily. Monomer.

It carries out the reaction Transfers a segment of a (1-&gt;4)-alpha-D-glucan chain to a primary hydroxy group in a similar glucan chain.. It functions in the pathway glycan biosynthesis; glycogen biosynthesis. Catalyzes the formation of the alpha-1,6-glucosidic linkages in glycogen by scission of a 1,4-alpha-linked oligosaccharide from growing alpha-1,4-glucan chains and the subsequent attachment of the oligosaccharide to the alpha-1,6 position. The sequence is that of 1,4-alpha-glucan branching enzyme GlgB from Francisella tularensis subsp. holarctica (strain FTNF002-00 / FTA).